A 342-amino-acid chain; its full sequence is Nucleoid-associated protein Spea_1765 (342 aa).

This sequence belongs to the YejK family.

The protein localises to the cytoplasm. It localises to the nucleoid. This Shewanella pealeana (strain ATCC 700345 / ANG-SQ1) protein is Nucleoid-associated protein Spea_1765.